The sequence spans 584 residues: Chondroitin proteoglycan 1 (584 aa).

Residues 1-17 (MTLKPVLLAFLVASAYA) form the signal peptide. S50 carries an O-linked (Xyl...) (chondroitin sulfate) serine glycan. 3 Chitin-binding type-2 domains span residues 58-115 (DTDC…QCGG), 211-268 (TKSC…ECTN), and 524-578 (VPAC…ECHQ). Disulfide bonds link C91-C104 and C244-C257. Residues 267 to 295 (TNGSGNDEGSADETTPESSGEMPYSNGYG) are disordered. An N-linked (GlcNAc...) asparagine glycan is attached at N268. The cysteines at positions 554 and 567 are disulfide-linked.

As to expression, expressed in the germline.

Required for polar body extrusion during cytokinesis in embryo development. Affects cortical granule size. Has roles in meiotic chromosome segregation, osmotic barrier function and polarization in conjunction with cpg-2. Binds chitin. This Caenorhabditis elegans protein is Chondroitin proteoglycan 1 (cpg-1).